The following is a 316-amino-acid chain: Ribosomal RNA small subunit methyltransferase H (316 aa).

S-adenosyl-L-methionine is bound by residues G39–H41, D56, F82, D103, and Q110.

Belongs to the methyltransferase superfamily. RsmH family.

The protein resides in the cytoplasm. The enzyme catalyses cytidine(1402) in 16S rRNA + S-adenosyl-L-methionine = N(4)-methylcytidine(1402) in 16S rRNA + S-adenosyl-L-homocysteine + H(+). Specifically methylates the N4 position of cytidine in position 1402 (C1402) of 16S rRNA. The sequence is that of Ribosomal RNA small subunit methyltransferase H from Methylacidiphilum infernorum (isolate V4) (Methylokorus infernorum (strain V4)).